Consider the following 256-residue polypeptide: MKKVLAGIVILLLNGCAMDPDLAPSDIEKATTTVDAVEGSTEQDSGLIDMLRRREDPQAGDPAWNPIRPQAKPEHYATATGSLFSSIQAQDLYDDTKPRGIGDIVTVMLEEKTQAKKSASSDLDKSTDLSMDPLVLGGKPLTIGDRDLSYEVANANKFSGTTSADQSNSIKGSISVEVIDVLANGNLMIRGEKWLTLNTGDEYIRVSGTIRPDDISQENTIESTRITNARIQYSGTGNRQDVQEQGWLANFFNVSL.

Residues 1–15 (MKKVLAGIVILLLNG) form the signal peptide. C16 carries the N-palmitoyl cysteine lipid modification. C16 is lipidated: S-diacylglycerol cysteine.

It belongs to the FlgH family. The basal body constitutes a major portion of the flagellar organelle and consists of four rings (L,P,S, and M) mounted on a central rod.

The protein localises to the cell outer membrane. It localises to the bacterial flagellum basal body. In terms of biological role, assembles around the rod to form the L-ring and probably protects the motor/basal body from shearing forces during rotation. This chain is Flagellar L-ring protein (flgH), found in Photobacterium profundum (strain SS9).